A 405-amino-acid polypeptide reads, in one-letter code: MIIKPKVRGFICTTTHPLGCERNVAEQIATTRANIPESERDKGPKNVLVIGASSGYGLAARVTAAFGYGASTLGVFFEKPGTEKKPGTAGWYNAAAFDKFAKAEGLYSKAINGDAFSHEAREKAIELIKQDMGQIDLVVYSLASPVRKLPDSGELKRSALKPIGETYTATAIDTNKDAIVEASVEPATEEEIADTVTVMGGEDWELWVDALDKAGVLAPGARSVAFSYIGTEITWPIYWHGALGKAKEDLDRAAGELDARLGQHGGGANVAVLKSVVTQASAAIPVMPLYISMVYKVMKEQGLHEGTIDQLNRLYRERLYSTQGQNGELATDEAGRLRLDDWELRDDVQQACQDLWPQVTTENLFTLTDYAGYKREFLKLFGFERDDVDYEADVDPVAEFDVVQL.

Residues 51–56 (GASSGY), 77–78 (FE), 114–115 (DA), and 142–143 (LA) contribute to the NAD(+) site. Residue Tyr228 coordinates substrate. Tyr238 (proton donor) is an active-site residue. NAD(+)-binding positions include Lys247 and 276–278 (VVT).

Belongs to the TER reductase family. In terms of assembly, monomer.

The enzyme catalyses a 2,3-saturated acyl-[ACP] + NAD(+) = a (2E)-enoyl-[ACP] + NADH + H(+). It functions in the pathway lipid metabolism; fatty acid biosynthesis. Functionally, involved in the final reduction of the elongation cycle of fatty acid synthesis (FAS II). Catalyzes the reduction of a carbon-carbon double bond in an enoyl moiety that is covalently linked to an acyl carrier protein (ACP). The polypeptide is Enoyl-[acyl-carrier-protein] reductase [NADH] (Chromohalobacter salexigens (strain ATCC BAA-138 / DSM 3043 / CIP 106854 / NCIMB 13768 / 1H11)).